We begin with the raw amino-acid sequence, 451 residues long: Phenylalanine--tRNA ligase, mitochondrial (451 aa).

Substrate contacts are provided by residues 157–160 (SAHQ), R179, 186–188 (QHY), and 193–195 (QLE). K202 is subject to N6-acetyllysine. Residues E287 and F312 each contribute to the substrate site. The region spanning 358–450 (SKYPAVFNDI…AVQLLGVEGR (93 aa)) is the FDX-ACB domain.

Belongs to the class-II aminoacyl-tRNA synthetase family. In terms of assembly, monomer.

It localises to the mitochondrion matrix. The protein localises to the mitochondrion. The enzyme catalyses tRNA(Phe) + L-phenylalanine + ATP = L-phenylalanyl-tRNA(Phe) + AMP + diphosphate + H(+). Its function is as follows. Is responsible for the charging of tRNA(Phe) with phenylalanine in mitochondrial translation. To a lesser extent, also catalyzes direct attachment of m-Tyr (an oxidized version of Phe) to tRNA(Phe), thereby opening the way for delivery of the misacylated tRNA to the ribosome and incorporation of ROS-damaged amino acid into proteins. The chain is Phenylalanine--tRNA ligase, mitochondrial (Fars2) from Mus musculus (Mouse).